Reading from the N-terminus, the 580-residue chain is Probable inositol transporter 2 (580 aa).

Transmembrane regions (helical) follow at residues 36–56 (GIGG…LLYI), 71–91 (EMIV…GGWA), 106–126 (FLFL…LLVV), 129–149 (VFVG…ISEA), 156–176 (GALV…SYLI), 189–209 (WMLG…FTLP), 275–295 (GLIA…NTVM), 315–335 (LLSL…IYFI), 343–363 (LLII…GVFY), 452–472 (FGWF…PGMG), 490–510 (ICGG…AQSF), and 521–541 (WTFL…MVCV).

The protein belongs to the major facilitator superfamily. Sugar transporter (TC 2.A.1.1) family. Expressed in the tapetum, but not in pollen grains. Detected in leaf vascular tissue and in roots.

It is found in the cell membrane. Its activity is regulated as follows. Inhibited by nickel and to a lesser extent by cobalt. Its function is as follows. Plasma membrane inositol-proton symporter. Specific for several inositol epimers, such as myoinositol and scylloinositol. D-chiroinositol, mucoinositol, alloinositol and pinitol are also transported with a lower activity. Not active with galactinol and phytate. In Arabidopsis thaliana (Mouse-ear cress), this protein is Probable inositol transporter 2 (INT2).